Here is a 314-residue protein sequence, read N- to C-terminus: Probable cell division protein WhiA (314 aa).

The segment at residues 274 to 308 (SLKELGEMVSTGPISKSGVNHRLRKLNDLADKIRN) is a DNA-binding region (H-T-H motif).

The protein belongs to the WhiA family.

In terms of biological role, involved in cell division and chromosome segregation. The polypeptide is Probable cell division protein WhiA (Staphylococcus aureus (strain Mu3 / ATCC 700698)).